Here is a 216-residue protein sequence, read N- to C-terminus: DNA-directed RNA polymerase subunit alpha (216 aa).

This sequence belongs to the RNA polymerase alpha chain family. As to quaternary structure, in plastids the minimal PEP RNA polymerase catalytic core is composed of four subunits: alpha, beta, beta', and beta''. When a (nuclear-encoded) sigma factor is associated with the core the holoenzyme is formed, which can initiate transcription.

The protein resides in the plastid. It localises to the chloroplast. The enzyme catalyses RNA(n) + a ribonucleoside 5'-triphosphate = RNA(n+1) + diphosphate. In terms of biological role, DNA-dependent RNA polymerase catalyzes the transcription of DNA into RNA using the four ribonucleoside triphosphates as substrates. In Euglena gracilis, this protein is DNA-directed RNA polymerase subunit alpha (rpoA).